Here is a 263-residue protein sequence, read N- to C-terminus: 5'-nucleotidase SurE (263 aa).

The a divalent metal cation site is built by aspartate 11, aspartate 12, serine 42, and asparagine 96.

It belongs to the SurE nucleotidase family. It depends on a divalent metal cation as a cofactor.

It is found in the cytoplasm. The enzyme catalyses a ribonucleoside 5'-phosphate + H2O = a ribonucleoside + phosphate. Functionally, nucleotidase that shows phosphatase activity on nucleoside 5'-monophosphates. This is 5'-nucleotidase SurE from Methanocorpusculum labreanum (strain ATCC 43576 / DSM 4855 / Z).